Consider the following 336-residue polypeptide: Dihydroorotate dehydrogenase (quinone) (336 aa).

FMN is bound by residues 62–66 and T86; that span reads AGLDK. K66 is a substrate binding site. 111-115 serves as a coordination point for substrate; sequence NRFGF. Residues N139 and N172 each contribute to the FMN site. Position 172 (N172) interacts with substrate. Catalysis depends on S175, which acts as the Nucleophile. Substrate is bound at residue N177. FMN is bound by residues K217 and T245. Residue 246 to 247 coordinates substrate; that stretch reads NT. FMN-binding positions include G268, G297, and 318-319; that span reads YS.

This sequence belongs to the dihydroorotate dehydrogenase family. Type 2 subfamily. In terms of assembly, monomer. It depends on FMN as a cofactor.

It is found in the cell membrane. It carries out the reaction (S)-dihydroorotate + a quinone = orotate + a quinol. Its pathway is pyrimidine metabolism; UMP biosynthesis via de novo pathway; orotate from (S)-dihydroorotate (quinone route): step 1/1. Catalyzes the conversion of dihydroorotate to orotate with quinone as electron acceptor. The polypeptide is Dihydroorotate dehydrogenase (quinone) (Photobacterium profundum (strain SS9)).